A 90-amino-acid polypeptide reads, in one-letter code: RNA-binding protein Hfq (90 aa).

One can recognise a Sm domain in the interval 9–69 (DRFLNHLRVN…ISTIIPSSYV (61 aa)).

Belongs to the Hfq family. In terms of assembly, homohexamer.

Its function is as follows. RNA chaperone that binds small regulatory RNA (sRNAs) and mRNAs to facilitate mRNA translational regulation in response to envelope stress, environmental stress and changes in metabolite concentrations. Also binds with high specificity to tRNAs. In Thermotoga sp. (strain RQ2), this protein is RNA-binding protein Hfq.